A 1080-amino-acid chain; its full sequence is Origin recognition complex subunit 3 (1080 aa).

Disordered regions lie at residues 92–112, 566–701, and 869–902; these read YGIS…DDSS, TIKL…PKRI, and IKNE…ENEQ. Residues 651 to 661 are compositionally biased toward basic and acidic residues; the sequence is IKSDLECNDND. Over residues 662–671 the composition is skewed to acidic residues; it reads KDNDDNDNDI. 2 stretches are compositionally biased toward low complexity: residues 672 to 688 and 875 to 896; these read NENN…NSNN and QQQQ…QQQQ.

It belongs to the ORC3 family. As to quaternary structure, ORC is composed of six subunits.

The protein localises to the nucleus. Functionally, component of the origin recognition complex (ORC) that binds origins of replication. DNA-binding is ATP-dependent, however specific DNA sequences that define origins of replication have not been identified so far. ORC is required to assemble the pre-replication complex necessary to initiate DNA replication. The chain is Origin recognition complex subunit 3 (orcC) from Dictyostelium discoideum (Social amoeba).